We begin with the raw amino-acid sequence, 278 residues long: Thiazole synthase (278 aa).

Lys-109 acts as the Schiff-base intermediate with DXP in catalysis. 1-deoxy-D-xylulose 5-phosphate contacts are provided by residues Gly-170, 197-198 (AG), and 219-220 (NT).

This sequence belongs to the ThiG family. In terms of assembly, homotetramer. Forms heterodimers with either ThiH or ThiS.

The protein localises to the cytoplasm. The enzyme catalyses [ThiS sulfur-carrier protein]-C-terminal-Gly-aminoethanethioate + 2-iminoacetate + 1-deoxy-D-xylulose 5-phosphate = [ThiS sulfur-carrier protein]-C-terminal Gly-Gly + 2-[(2R,5Z)-2-carboxy-4-methylthiazol-5(2H)-ylidene]ethyl phosphate + 2 H2O + H(+). The protein operates within cofactor biosynthesis; thiamine diphosphate biosynthesis. In terms of biological role, catalyzes the rearrangement of 1-deoxy-D-xylulose 5-phosphate (DXP) to produce the thiazole phosphate moiety of thiamine. Sulfur is provided by the thiocarboxylate moiety of the carrier protein ThiS. In vitro, sulfur can be provided by H(2)S. The polypeptide is Thiazole synthase (Cupriavidus pinatubonensis (strain JMP 134 / LMG 1197) (Cupriavidus necator (strain JMP 134))).